The chain runs to 416 residues: Phosphoglycerate kinase (416 aa).

Residues 24-26 (DLN), arginine 40, 63-66 (HLGR), arginine 126, and arginine 166 contribute to the substrate site. ATP contacts are provided by residues lysine 216, glycine 304, glutamate 335, and 364 to 367 (GGDS).

Belongs to the phosphoglycerate kinase family. Monomer.

The protein localises to the cytoplasm. The enzyme catalyses (2R)-3-phosphoglycerate + ATP = (2R)-3-phospho-glyceroyl phosphate + ADP. The protein operates within carbohydrate degradation; glycolysis; pyruvate from D-glyceraldehyde 3-phosphate: step 2/5. This is Phosphoglycerate kinase from Mycobacterium leprae (strain Br4923).